We begin with the raw amino-acid sequence, 211 residues long: Tudor-interacting repair regulator protein (211 aa).

Residues Lys10 and Lys151 each participate in a glycyl lysine isopeptide (Lys-Gly) (interchain with G-Cter in ubiquitin) cross-link. The tract at residues 118 to 205 is interaction with PXN; it reads TLEQLHAVEI…TEKQKKALEK (88 aa).

This sequence belongs to the Nudix hydrolase family. TIRR subfamily. Homodimer. Interacts with TP53BP1 (via the Tudor-like domain); interaction is abolished following DNA damage and TP53BP1 phosphorylation by ATM. Interacts (via the cytoplasmic part) with SDC4. Interacts with TGFB1I1 and PXN.

The protein localises to the nucleus. Its function is as follows. Key regulator of TP53BP1 required to stabilize TP53BP1 and regulate its recruitment to chromatin. In absence of DNA damage, interacts with the tandem Tudor-like domain of TP53BP1, masking the region that binds histone H4 dimethylated at 'Lys-20' (H4K20me2), thereby preventing TP53BP1 recruitment to chromatin and maintaining TP53BP1 localization to the nucleus. Following DNA damage, ATM-induced phosphorylation of TP53BP1 and subsequent recruitment of RIF1 leads to dissociate NUDT16L1/TIRR from TP53BP1, unmasking the tandem Tudor-like domain and allowing recruitment of TP53BP1 to DNA double strand breaks (DSBs). Binds U8 snoRNA. This Homo sapiens (Human) protein is Tudor-interacting repair regulator protein.